The following is a 280-amino-acid chain: Phosphatidylglycerol--prolipoprotein diacylglyceryl transferase (280 aa).

The next 4 helical transmembrane spans lie at W30–I50, F71–Y91, I106–I126, and A132–F152. R154 serves as a coordination point for a 1,2-diacyl-sn-glycero-3-phospho-(1'-sn-glycerol). 3 helical membrane-spanning segments follow: residues Q188–Y208, G217–F237, and W251–A271.

The protein belongs to the Lgt family.

The protein resides in the cell inner membrane. The enzyme catalyses L-cysteinyl-[prolipoprotein] + a 1,2-diacyl-sn-glycero-3-phospho-(1'-sn-glycerol) = an S-1,2-diacyl-sn-glyceryl-L-cysteinyl-[prolipoprotein] + sn-glycerol 1-phosphate + H(+). It functions in the pathway protein modification; lipoprotein biosynthesis (diacylglyceryl transfer). Catalyzes the transfer of the diacylglyceryl group from phosphatidylglycerol to the sulfhydryl group of the N-terminal cysteine of a prolipoprotein, the first step in the formation of mature lipoproteins. This is Phosphatidylglycerol--prolipoprotein diacylglyceryl transferase from Rhizobium meliloti (strain 1021) (Ensifer meliloti).